We begin with the raw amino-acid sequence, 245 residues long: Protein ARV 1 (245 aa).

The next 5 membrane-spanning stretches (helical) occupy residues 70–90 (INPATVNIQHLLWKLVFAYLL), 117–137 (IKVLIGVLSANAAFIISFAIA), 163–183 (IFLLAMLVWEFPMSVIFFVDI), 200–220 (TMTRCIAVCLIAHLIRFLVGQ), and 224–244 (PTIFLIQIGSLLQYMSYFFRI).

This sequence belongs to the ARV1 family. Restricted to tissues in which cells are actively dividing or expanding. Mostly expressed in roots and flowers, and, to a lower extent, in stems and leaves.

The protein resides in the endoplasmic reticulum membrane. Its function is as follows. Mediator of sterol homeostasis involved in sterol uptake, trafficking and distribution into membranes. Also regulates the sphingolipid metabolism. The chain is Protein ARV 1 from Arabidopsis thaliana (Mouse-ear cress).